The chain runs to 339 residues: Biotin synthase (339 aa).

One can recognise a Radical SAM core domain in the interval 53-271; that stretch reads NAIQMSRLLS…IALARILMPR (219 aa). Residues cysteine 68, cysteine 72, and cysteine 75 each contribute to the [4Fe-4S] cluster site. [2Fe-2S] cluster is bound by residues cysteine 112, cysteine 143, cysteine 203, and arginine 275.

Belongs to the radical SAM superfamily. Biotin synthase family. As to quaternary structure, homodimer. [4Fe-4S] cluster serves as cofactor. Requires [2Fe-2S] cluster as cofactor.

The catalysed reaction is (4R,5S)-dethiobiotin + (sulfur carrier)-SH + 2 reduced [2Fe-2S]-[ferredoxin] + 2 S-adenosyl-L-methionine = (sulfur carrier)-H + biotin + 2 5'-deoxyadenosine + 2 L-methionine + 2 oxidized [2Fe-2S]-[ferredoxin]. It participates in cofactor biosynthesis; biotin biosynthesis; biotin from 7,8-diaminononanoate: step 2/2. In terms of biological role, catalyzes the conversion of dethiobiotin (DTB) to biotin by the insertion of a sulfur atom into dethiobiotin via a radical-based mechanism. The sequence is that of Biotin synthase from Agrobacterium fabrum (strain C58 / ATCC 33970) (Agrobacterium tumefaciens (strain C58)).